A 416-amino-acid chain; its full sequence is Adenylosuccinate synthetase (416 aa).

GTP is bound by residues G13 to K19 and G41 to T43. The Proton acceptor role is filled by D14. D14 and G41 together coordinate Mg(2+). IMP-binding positions include D14–K17, N39–H42, T126, R140, Q220, T235, and R299. The Proton donor role is filled by H42. T295–R301 contributes to the substrate binding site. Residues R301, K327 to D329, and S405 to S407 contribute to the GTP site.

Belongs to the adenylosuccinate synthetase family. In terms of assembly, homodimer. Mg(2+) is required as a cofactor.

It localises to the cytoplasm. It catalyses the reaction IMP + L-aspartate + GTP = N(6)-(1,2-dicarboxyethyl)-AMP + GDP + phosphate + 2 H(+). It participates in purine metabolism; AMP biosynthesis via de novo pathway; AMP from IMP: step 1/2. Plays an important role in the de novo pathway of purine nucleotide biosynthesis. Catalyzes the first committed step in the biosynthesis of AMP from IMP. This chain is Adenylosuccinate synthetase, found in Campylobacter fetus subsp. fetus (strain 82-40).